The primary structure comprises 227 residues: Cytochrome c oxidase subunit 2 (227 aa).

Over 1 to 14 (MAYPFELGFQDATS) the chain is Mitochondrial intermembrane. Residues 15–45 (PIMEELLHFHDHTLMIVFLISSLVLYIISLM) traverse the membrane as a helical segment. Residues 46 to 59 (LTTKLTHTSTMDAQ) are Mitochondrial matrix-facing. A helical transmembrane segment spans residues 60 to 87 (EVETIWTILPAIILILIALPSLRILYMM). At 88 to 227 (DEINDPSLTV…HFENWSSSML (140 aa)) the chain is on the mitochondrial intermembrane side. 6 residues coordinate Cu cation: His161, Cys196, Glu198, Cys200, His204, and Met207. Glu198 lines the Mg(2+) pocket.

This sequence belongs to the cytochrome c oxidase subunit 2 family. In terms of assembly, component of the cytochrome c oxidase (complex IV, CIV), a multisubunit enzyme composed of 14 subunits. The complex is composed of a catalytic core of 3 subunits MT-CO1, MT-CO2 and MT-CO3, encoded in the mitochondrial DNA, and 11 supernumerary subunits COX4I, COX5A, COX5B, COX6A, COX6B, COX6C, COX7A, COX7B, COX7C, COX8 and NDUFA4, which are encoded in the nuclear genome. The complex exists as a monomer or a dimer and forms supercomplexes (SCs) in the inner mitochondrial membrane with NADH-ubiquinone oxidoreductase (complex I, CI) and ubiquinol-cytochrome c oxidoreductase (cytochrome b-c1 complex, complex III, CIII), resulting in different assemblies (supercomplex SCI(1)III(2)IV(1) and megacomplex MCI(2)III(2)IV(2)). Found in a complex with TMEM177, COA6, COX18, COX20, SCO1 and SCO2. Interacts with TMEM177 in a COX20-dependent manner. Interacts with COX20. Interacts with COX16. It depends on Cu cation as a cofactor.

Its subcellular location is the mitochondrion inner membrane. The enzyme catalyses 4 Fe(II)-[cytochrome c] + O2 + 8 H(+)(in) = 4 Fe(III)-[cytochrome c] + 2 H2O + 4 H(+)(out). Its function is as follows. Component of the cytochrome c oxidase, the last enzyme in the mitochondrial electron transport chain which drives oxidative phosphorylation. The respiratory chain contains 3 multisubunit complexes succinate dehydrogenase (complex II, CII), ubiquinol-cytochrome c oxidoreductase (cytochrome b-c1 complex, complex III, CIII) and cytochrome c oxidase (complex IV, CIV), that cooperate to transfer electrons derived from NADH and succinate to molecular oxygen, creating an electrochemical gradient over the inner membrane that drives transmembrane transport and the ATP synthase. Cytochrome c oxidase is the component of the respiratory chain that catalyzes the reduction of oxygen to water. Electrons originating from reduced cytochrome c in the intermembrane space (IMS) are transferred via the dinuclear copper A center (CU(A)) of subunit 2 and heme A of subunit 1 to the active site in subunit 1, a binuclear center (BNC) formed by heme A3 and copper B (CU(B)). The BNC reduces molecular oxygen to 2 water molecules using 4 electrons from cytochrome c in the IMS and 4 protons from the mitochondrial matrix. In Tamias amoenus (Yellow-pine chipmunk), this protein is Cytochrome c oxidase subunit 2 (MT-CO2).